Here is a 934-residue protein sequence, read N- to C-terminus: Protocadherin gamma-C3 (934 aa).

Residues 1–31 form the signal peptide; that stretch reads MVPEAWRSGLVSTGRVVGVLLLLGALNKAST. Cadherin domains are found at residues 32–135, 136–244, 245–352, 353–457, 458–567, and 572–685; these read VIHY…NPAF, PTQE…APVF, NQSL…APEI, TVTS…PPQS, SQSS…APQV, and PGGS…APRE. Over 32–693 the chain is Extracellular; it reads VIHYEIPEER…REQNKNLTFY (662 aa). N-linked (GlcNAc...) asparagine glycans are attached at residues Asn-245, Asn-424, Asn-478, Asn-550, Asn-615, and Asn-689. The chain crosses the membrane as a helical span at residues 694–714; sequence LLLSLILVSVGFVVTVFGVII. At 715 to 934 the chain is on the cytoplasmic side; the sequence is FKVYKWKQSR…KKKSGKKEKK (220 aa). 2 disordered regions span residues 804–843 and 904–934; these read ESAP…WPNN and ATLT…KEKK. Positions 812–843 are enriched in polar residues; that stretch reads APPNTDWRFSQAQRPGTSGSQNGDDTGTWPNN. A compositionally biased stretch (basic residues) spans 924-934; sequence NKKKSGKKEKK.

It is found in the cell membrane. Functionally, potential calcium-dependent cell-adhesion protein. May be involved in the establishment and maintenance of specific neuronal connections in the brain. This chain is Protocadherin gamma-C3 (PCDHGC3), found in Pan troglodytes (Chimpanzee).